A 64-amino-acid chain; its full sequence is Large ribosomal subunit protein bL35 (64 aa).

Belongs to the bacterial ribosomal protein bL35 family.

The polypeptide is Large ribosomal subunit protein bL35 (Shewanella frigidimarina (strain NCIMB 400)).